We begin with the raw amino-acid sequence, 72 residues long: Protein kish-A (72 aa).

An N-terminal signal peptide occupies residues 1–26; it reads MSAIFNFQSLLTVILLLICTCAYIRS. Residues 27–53 lie on the Extracellular side of the membrane; the sequence is LTPSLLDKNKTGFLGIFWKCARIGERK. Asn35 carries N-linked (GlcNAc...) asparagine glycosylation. A helical membrane pass occupies residues 54 to 71; it reads SPYVAFCCIVMALTILFS. Glu72 is a topological domain (cytoplasmic).

This sequence belongs to the KISH family.

Its subcellular location is the golgi apparatus membrane. Its function is as follows. Involved in the early part of the secretory pathway. This is Protein kish-A (tmem167a) from Danio rerio (Zebrafish).